A 153-amino-acid polypeptide reads, in one-letter code: Glycosylation-dependent cell adhesion molecule 1 (153 aa).

The signal sequence occupies residues 1–18 (MKFLCVLLLASLAATSLA). Threonine 34 is a glycosylation site (O-linked (GalNAc...) threonine; partial). Phosphoserine occurs at positions 47, 52, 56, 58, and 64. O-linked (HexNAc...) serine glycosylation is present at serine 78. Residue asparagine 95 is glycosylated (N-linked (GlcNAc...) asparagine). The tract at residues 95 to 115 (NATLGSEETTEHTPSDASTTE) is disordered. O-linked (GalNAc...) threonine glycosylation occurs at threonine 104.

Belongs to the PP3/GlyCAM-1 family. Highly and specifically expressed in the lactating mammary gland.

It is found in the membrane. This chain is Glycosylation-dependent cell adhesion molecule 1 (GLYCAM1), found in Bos taurus (Bovine).